A 193-amino-acid polypeptide reads, in one-letter code: Large ribosomal subunit protein uL18 (193 aa).

It belongs to the universal ribosomal protein uL18 family. As to quaternary structure, part of the 50S ribosomal subunit. Contacts the 5S and 23S rRNAs.

This is one of the proteins that bind and probably mediate the attachment of the 5S RNA into the large ribosomal subunit, where it forms part of the central protuberance. In Methanosphaera stadtmanae (strain ATCC 43021 / DSM 3091 / JCM 11832 / MCB-3), this protein is Large ribosomal subunit protein uL18.